The sequence spans 160 residues: UPF0262 protein Mrad2831_3513 (160 aa).

The protein belongs to the UPF0262 family.

This Methylobacterium radiotolerans (strain ATCC 27329 / DSM 1819 / JCM 2831 / NBRC 15690 / NCIMB 10815 / 0-1) protein is UPF0262 protein Mrad2831_3513.